A 584-amino-acid polypeptide reads, in one-letter code: Negative regulator of RAS-cAMP pathway (584 aa).

A Phosphothreonine modification is found at T25. Disordered regions lie at residues 95-167, 209-279, 291-320, 343-366, and 381-432; these read PIKP…STTS, PLQS…SKTS, SEDE…DDYN, NLDS…HDPV, and SNSN…SLKT. 3 stretches are compositionally biased toward polar residues: residues 114–127, 229–254, and 267–278; these read PPTT…TRPM, CIDN…SFPQ, and NDQNGQLSLSKT. Phosphoserine occurs at positions 247 and 276. The span at 307 to 320 shows a compositional bias: acidic residues; the sequence is FYADEDDEEYDDYN. Residues 343–363 show a composition bias toward polar residues; it reads NLDSTKSSVSSANTINSNTSH. Over residues 381–392 the composition is skewed to low complexity; the sequence is SNSNNHNTAHSE. The span at 398–432 shows a compositional bias: polar residues; sequence VSPTPQSSHSNIGPQPQQNPPSANGIKQQKPSLKT. At S442 the chain carries Phosphoserine. S518 carries the post-translational modification Phosphoserine; by PKA. The interval 551-584 is disordered; that stretch reads DNTSIANSNGNGNDDTSNQRTEALGRKTSNGGRI. Low complexity predominate over residues 557–568; sequence NSNGNGNDDTSN.

It is found in the nucleus. Negative regulator of Ras-cAMP pathway. Involved in transcriptional regulation of galactose-inducible genes. In Saccharomyces cerevisiae (strain ATCC 204508 / S288c) (Baker's yeast), this protein is Negative regulator of RAS-cAMP pathway (MKS1).